A 97-amino-acid polypeptide reads, in one-letter code: Large ribosomal subunit protein eL21 (97 aa).

It belongs to the eukaryotic ribosomal protein eL21 family.

The polypeptide is Large ribosomal subunit protein eL21 (Methanospirillum hungatei JF-1 (strain ATCC 27890 / DSM 864 / NBRC 100397 / JF-1)).